Consider the following 190-residue polypeptide: Holliday junction branch migration complex subunit RuvA (190 aa).

Positions 1 to 64 (MIGKLTGTLL…EDAQLLYGFG (64 aa)) are domain I. Residues 65–137 (TAQERQAFRE…LKGKLGADVG (73 aa)) form a domain II region. A flexible linker region spans residues 137-141 (GVRAH). Positions 142–190 (AANDNQADILQALLALGYNDKEAAAALKALPADVGVSEGIKLALKSLSK) are domain III.

It belongs to the RuvA family. Homotetramer. Forms an RuvA(8)-RuvB(12)-Holliday junction (HJ) complex. HJ DNA is sandwiched between 2 RuvA tetramers; dsDNA enters through RuvA and exits via RuvB. An RuvB hexamer assembles on each DNA strand where it exits the tetramer. Each RuvB hexamer is contacted by two RuvA subunits (via domain III) on 2 adjacent RuvB subunits; this complex drives branch migration. In the full resolvosome a probable DNA-RuvA(4)-RuvB(12)-RuvC(2) complex forms which resolves the HJ.

The protein resides in the cytoplasm. Its function is as follows. The RuvA-RuvB-RuvC complex processes Holliday junction (HJ) DNA during genetic recombination and DNA repair, while the RuvA-RuvB complex plays an important role in the rescue of blocked DNA replication forks via replication fork reversal (RFR). RuvA specifically binds to HJ cruciform DNA, conferring on it an open structure. The RuvB hexamer acts as an ATP-dependent pump, pulling dsDNA into and through the RuvAB complex. HJ branch migration allows RuvC to scan DNA until it finds its consensus sequence, where it cleaves and resolves the cruciform DNA. This is Holliday junction branch migration complex subunit RuvA from Acidovorax sp. (strain JS42).